Here is a 235-residue protein sequence, read N- to C-terminus: Eukaryotic translation initiation factor 4E-1 (235 aa).

A compositionally biased stretch (basic and acidic residues) spans 16–25 (VNKHRGVRSD). Positions 16–56 (VNKHRGVRSDGEEDEQLEEGEIVGGDADTLSSSSSSRPGTA) are disordered. Acidic residues predominate over residues 26-36 (GEEDEQLEEGE). EIF4G-binding regions lie at residues 60-63 (HPLE) and 70-106 (FDTP…NNIH). MRNA is bound by residues 78 to 83 (KQVAWG), Lys-110, and 128 to 129 (WE). Residues Cys-133 and Cys-171 are joined by a disulfide bond. The tract at residues 154–163 (YTLLAMIGEQ) is EIF4G-binding. MRNA contacts are provided by residues 178–183 (RARQEK) and 223–227 (KTLDR).

Belongs to the eukaryotic initiation factor 4E family. EIF4F is a multi-subunit complex, the composition of which varies with external and internal environmental conditions. It is composed of at least EIF4A, EIF4E and EIF4G. EIF4E is also known to interact with other partners. In higher plants two isoforms of EIF4F have been identified, named isoform EIF4F and isoform EIF(iso)4F. Isoform EIF4F has subunits p220 and p26, whereas isoform EIF(iso)4F has subunits p82 and p28. As to quaternary structure, (Microbial infection) Interacts with potyvirus viral genome-linked protein (VPg); this interaction is possible in susceptible hosts but impaired in resistant plants. In terms of processing, according to the redox status, the Cys-133-Cys-171 disulfide bridge may have a role in regulating protein function by affecting its ability to bind capped mRNA.

The protein resides in the nucleus. It is found in the cytoplasm. In terms of biological role, component of the protein complex eIF4F, which is involved in the recognition of the mRNA cap, ATP-dependent unwinding of 5'-terminal secondary structure and recruitment of mRNA to the ribosome. Recognizes and binds the 7-methylguanosine-containing mRNA cap during an early step in the initiation of protein synthesis and facilitates ribosome binding by inducing the unwinding of the mRNAs secondary structures. Key component of recessive resistance to potyviruses. (Microbial infection) Susceptibility host factor required for viral infection by recruiting viral RNAs to the host ribosomal complex via an interaction with viral genome-linked protein (VPg). This is Eukaryotic translation initiation factor 4E-1 from Lactuca sativa (Garden lettuce).